A 157-amino-acid polypeptide reads, in one-letter code: UPF0225 protein Psyr_3863 (157 aa).

This sequence belongs to the UPF0225 family.

The protein is UPF0225 protein Psyr_3863 of Pseudomonas syringae pv. syringae (strain B728a).